The sequence spans 325 residues: ATP phosphoribosyltransferase (325 aa).

The protein belongs to the ATP phosphoribosyltransferase family. Long subfamily. The cofactor is Mg(2+).

Its subcellular location is the cytoplasm. The enzyme catalyses 1-(5-phospho-beta-D-ribosyl)-ATP + diphosphate = 5-phospho-alpha-D-ribose 1-diphosphate + ATP. It functions in the pathway amino-acid biosynthesis; L-histidine biosynthesis; L-histidine from 5-phospho-alpha-D-ribose 1-diphosphate: step 1/9. Its activity is regulated as follows. Feedback inhibited by histidine. Its function is as follows. Catalyzes the condensation of ATP and 5-phosphoribose 1-diphosphate to form N'-(5'-phosphoribosyl)-ATP (PR-ATP). Has a crucial role in the pathway because the rate of histidine biosynthesis seems to be controlled primarily by regulation of HisG enzymatic activity. This is ATP phosphoribosyltransferase from Rhodopseudomonas palustris (strain HaA2).